The following is a 683-amino-acid chain: Acyl-CoA synthetase short-chain family member 3, mitochondrial (683 aa).

The N-terminal 29 residues, 1–29 (MKPSWLQCRKVTGAGTLGAPLPGSPSVRG), are a transit peptide targeting the mitochondrion. Residue 223-226 (EPGR) coordinates CoA. Residues 421–423 (GER) and 442–447 (DHWWQT) contribute to the ATP site. Lys514 is modified (N6-succinyllysine). The residue at position 520 (Lys520) is an N6-acetyllysine. The ATP site is built by Asp535, Arg550, and Arg561. Residue Arg620 participates in CoA binding.

Belongs to the ATP-dependent AMP-binding enzyme family. Expressed in a wide range of tissues, with the highest levels observed in the liver followed by kidney.

It is found in the mitochondrion matrix. The enzyme catalyses acetate + ATP + CoA = acetyl-CoA + AMP + diphosphate. It carries out the reaction propanoate + ATP + CoA = propanoyl-CoA + AMP + diphosphate. The catalysed reaction is butanoate + ATP + CoA = butanoyl-CoA + AMP + diphosphate. Functionally, catalyzes the synthesis of acetyl-CoA from short-chain fatty acids. Propionate is the preferred substrate but can also utilize acetate and butyrate with a much lower affinity. This Rattus norvegicus (Rat) protein is Acyl-CoA synthetase short-chain family member 3, mitochondrial (Acss3).